The primary structure comprises 645 residues: DEAD-box ATP-dependent RNA helicase 46 (645 aa).

Disordered stretches follow at residues 1 to 22 (MAATASAIRYAPEDPNLPKPWK) and 44 to 137 (YERP…AGNE). In terms of domain architecture, WW spans 15–49 (PNLPKPWKGLVDSRTGYLYFWNPETNVTQYERPAS). The span at 60-72 (VSSSVQTNQQSSS) shows a compositional bias: low complexity. The span at 77-91 (GKEDDKYGRGSDGPK) shows a compositional bias: basic and acidic residues. The span at 108 to 136 (SSNDAASGLGNASSGGSSARGPPSSAAGN) shows a compositional bias: low complexity. Positions 161–189 (MSFEATGLPNELLREVYSAGFSAPSPIQA) match the Q motif motif. One can recognise a Helicase ATP-binding domain in the interval 192–366 (WPIAMQNRDI…ADLLVNPAQV (175 aa)). 205 to 212 (AKTGSGKT) contacts ATP. Positions 314 to 317 (DEAD) match the DEAD box motif. Residues 395-539 (RLEQILRSQE…KVPPQVREMA (145 aa)) enclose the Helicase C-terminal domain. Positions 532–645 (PPQVREMATR…FHEAMMMKNR (114 aa)) are disordered. The span at 556–597 (SSGGGGGRGGYGDSGYGGRGESGYGSRGDSGYGGRGDSGGRG) shows a compositional bias: gly residues. A compositionally biased stretch (low complexity) spans 598–608 (SWAPSRDSSGS). Residues 612–623 (GRERSRSPERFR) are compositionally biased toward basic and acidic residues. Low complexity predominate over residues 624-634 (GGPPSTSSPPR).

The protein belongs to the DEAD box helicase family. DDX5/DBP2 subfamily.

The catalysed reaction is ATP + H2O = ADP + phosphate + H(+). In Arabidopsis thaliana (Mouse-ear cress), this protein is DEAD-box ATP-dependent RNA helicase 46 (RH46).